The primary structure comprises 310 residues: GMP synthase [glutamine-hydrolyzing] subunit B (310 aa).

The GMPS ATP-PPase domain occupies methionine 1 to phenylalanine 187. Serine 27–serine 33 serves as a coordination point for ATP.

Heterodimer composed of a glutamine amidotransferase subunit (A) and a GMP-binding subunit (B).

It catalyses the reaction XMP + L-glutamine + ATP + H2O = GMP + L-glutamate + AMP + diphosphate + 2 H(+). The protein operates within purine metabolism; GMP biosynthesis; GMP from XMP (L-Gln route): step 1/1. Functionally, catalyzes the synthesis of GMP from XMP. The sequence is that of GMP synthase [glutamine-hydrolyzing] subunit B (guaAB) from Thermoplasma acidophilum (strain ATCC 25905 / DSM 1728 / JCM 9062 / NBRC 15155 / AMRC-C165).